We begin with the raw amino-acid sequence, 427 residues long: Probable protein phosphatase 2C 64 (427 aa).

Residues 1 to 36 (MGNCVARSGTAVDAGGDGGEDGKRRRRRWKAPREDQ) form a disordered region. One can recognise a PPM-type phosphatase domain in the interval 53 to 331 (TATVYTQQGR…DDCAVVCLYL (279 aa)). The Mn(2+) site is built by Asp-89, Gly-90, Asp-276, and Asp-322.

This sequence belongs to the PP2C family. Mg(2+) serves as cofactor. Requires Mn(2+) as cofactor.

The catalysed reaction is O-phospho-L-seryl-[protein] + H2O = L-seryl-[protein] + phosphate. It carries out the reaction O-phospho-L-threonyl-[protein] + H2O = L-threonyl-[protein] + phosphate. The protein is Probable protein phosphatase 2C 64 of Oryza sativa subsp. japonica (Rice).